We begin with the raw amino-acid sequence, 369 residues long: F-box protein UCC1 (369 aa).

One can recognise an F-box domain in the interval 8-45 (LMDLPLEIHLSLLEYVPNELRAVNKYFYVLHNHSYKEK).

In terms of assembly, component of the SCF(UCC1) E3 ubiquitin-protein ligase complex composed of CDC53, SKP1, RBX1 and UCC1. Interacts with CIT2. In terms of processing, monoubiquitinated by UBC4.

Its pathway is protein modification; protein ubiquitination. Functionally, substrate recognition component of the SKP1-CUL1-F-box protein E3 ubiquitin-protein ligase complex SCF(UCC1) which mediates the ubiquitination and subsequent proteasomal degradation of target proteins. The SCF(UCC1) complex acts as a metabolic switch for the glyoxylate cycle and regulates the level of CIT2 protein to maintain citrate homeostasis. The polypeptide is F-box protein UCC1 (UCC1) (Saccharomyces cerevisiae (strain ATCC 204508 / S288c) (Baker's yeast)).